Here is a 1457-residue protein sequence, read N- to C-terminus: MSVFTFGHGSNGALGLGKITDDTCPTPQKVNYFTEIDKRVKKVACGSYHTVFVTDDEHLYICGIKKDPKHGTTLFYTSPPPTTTTTTTTTSSTSATTTTTNGMVNEKNNNNKNNNGEKIVNSKPESVIIKDGASNTTNDSTSSSSTSTSSLSSSLPPTNIETPRDKKKPPIKLDKGIPHHRSTRELIQRPESPLLNKLLTSKAEMEFKHYESNEKSKDEMKDNENENEEDEDDDDDDSTIRQNEDKESSLIDDNESETSLRINKKDAENITNNIRLIKELDEQQQQPQQPQQNLKGIMNQPPLPTNDDLDEDPNIHFTPIRISTHFLENSPLNTIKQVALGNYHIVLLTEGGNVWTWGSNSNGQLGYLVDTQQQQQQQLQQQQSMSSLQPSASSSSPSSSSLQTTCTPKMVEIKCVKYIATGVKNTAALTEWGELYMWGINEHGELGLGDTIDRRTPTRVIRLKNEVVSTIACSSTHSACYTESGKMYVWGQSDETGKIQAIPSPLPIHSYLDREIKSPNGGGVGGFFGGGGKIKQLACGQRCIAVLTQMGEVFMWEIPGIPIPLRNALENHSVRNIVMGNFHLVCLTDSGEVVTIGRNKTGQLGRTDAENEPGIVKQLSFDPDGLNSDEFVVSIAAGEFHSVALVENTPKTKLALQLVRMQRNYLRQLNILNNIYYKSMMSMASPYDPVVLSMMNNGSASTLPPSLKGLSGGLPDNANNTIKNGKDKDNHHNGDSNGHHSNGHYHGNGNNGNNSITTSNSISSPSLLGSGGTLKSRSASIATIRGLFGINHMLHHSQSQSFQEENSTVTEDEIKEIFSDIEALSKLTEKFLSYLDQRMDNWDPVSKVLGDIFLDEALMAAYRIYIPYSDSYNTSCMTLFNIRRRNERLSNIIKDCEKKSKSFGVKLDQEFVKEIDLKSLLLSPLQNIPRIYILLRELGSDDSGNINPRDIDLINFAATKFQVLLERMNQNFQFVNAVEILHCSSNEYGNPQIMGGSLPQLVDKLTHHNISDPNFRDVFLLTFRAFTTPCNLFDLLVETFQRQKHLKNGRVVNVITSWVVHHFYDFEKDKLSDFTQDPNHNPQLLSEKLEQFIYSEDHQSVSQIKLQYFSHRKRLESSINLIDNQKLTQNEITTPPPLQIQNNNQNNNLENNNNNNNNNNTTTTTTTPNDNINDINNNNNNNNNNNNNNNNNNNNNNNNNNNNNNNNNLTNSTIKLVVQPPIPINFNLLDSQPIEVAQTLTIMDHHYFAMIDKREFLGQRWAKNKSPNIQISTDHFNRTSQVVVTEILKSKNSKQRSATLGYFISVAYCCFELNNLSGTASIIYGLNSASIQRLKKSWSKLPKESMIAFEYLDKIVTPMKNYISLRHLMTTIQPPCVPFLGTYLKDLTFIEEGNPSIIGGLINFYKQRKIAEVIFQIQQHQQVVYSAIRSNPTIKAFLMSSHTFDDKQAQKISSEAE.

The RCC1 1 repeat unit spans residues 1–55 (MSVFTFGHGSNGALGLGKITDDTCPTPQKVNYFTEIDKRVKKVACGSYHTVFVTD). Disordered stretches follow at residues 75–196 (FYTS…PLLN), 209–264 (HYES…RINK), 282–313 (EQQQ…DEDP), and 376–404 (QQQL…SLQT). Low complexity-rich tracts occupy residues 83 to 121 (TTTT…KIVN) and 134 to 158 (SNTT…LPPT). Basic and acidic residues-rich tracts occupy residues 171–188 (IKLD…ELIQ) and 209–224 (HYES…KDNE). Positions 225–237 (NENEEDEDDDDDD) are enriched in acidic residues. The segment covering 238 to 249 (STIRQNEDKESS) has biased composition (basic and acidic residues). Composition is skewed to low complexity over residues 283–292 (QQQQPQQPQQ) and 376–403 (QQQL…SSLQ). RCC1 repeat units lie at residues 351–401 (GGNV…SSSS), 432–483 (WGEL…CYTE), 485–549 (GKMY…VLTQ), and 590–647 (SGEV…ALVE). Residues 650 to 971 (PKTKLALQLV…QVLLERMNQN (322 aa)) form the DH domain. The segment covering 703 to 715 (LPPSLKGLSGGLP) has biased composition (low complexity). Positions 703–762 (LPPSLKGLSGGLPDNANNTIKNGKDKDNHHNGDSNGHHSNGHYHGNGNNGNNSITTSNSI) are disordered. A compositionally biased stretch (basic and acidic residues) spans 724–738 (NGKDKDNHHNGDSNG). Residues 739-762 (HHSNGHYHGNGNNGNNSITTSNSI) show a composition bias toward low complexity. One can recognise an N-terminal Ras-GEF domain in the interval 989–1109 (GNPQIMGGSL…SVSQIKLQYF (121 aa)). Positions 1127 to 1210 (LTQNEITTPP…NNNNNNNNLT (84 aa)) are disordered. Positions 1138 to 1211 (LQIQNNNQNN…NNNNNNNLTN (74 aa)) form a coiled coil. Positions 1142–1210 (NNNQNNNLEN…NNNNNNNNLT (69 aa)) are enriched in low complexity. The region spanning 1232-1454 (QPIEVAQTLT…DDKQAQKISS (223 aa)) is the Ras-GEF domain.

In terms of biological role, promotes the exchange of Ras-bound GDP by GTP. The polypeptide is Ras guanine nucleotide exchange factor C (gefC) (Dictyostelium discoideum (Social amoeba)).